The sequence spans 450 residues: Bifunctional protein GlmU (450 aa).

Residues Met1–Arg226 form a pyrophosphorylase region. UDP-N-acetyl-alpha-D-glucosamine is bound by residues Leu7 to Gly10, Lys21, Gln73, and Gly78 to Thr79. Asp103 is a binding site for Mg(2+). Residues Gly140, Glu155, Asn170, and Asn224 each coordinate UDP-N-acetyl-alpha-D-glucosamine. Residue Asn224 participates in Mg(2+) binding. Residues Gln227–Glu247 are linker. The N-acetyltransferase stretch occupies residues Gly248–Gly450. UDP-N-acetyl-alpha-D-glucosamine contacts are provided by Arg329 and Lys347. His359 acts as the Proton acceptor in catalysis. The UDP-N-acetyl-alpha-D-glucosamine site is built by Tyr362 and Asn373. Acetyl-CoA-binding positions include Ala376, Asn382–Tyr383, Ala419, and Arg436.

The protein in the N-terminal section; belongs to the N-acetylglucosamine-1-phosphate uridyltransferase family. This sequence in the C-terminal section; belongs to the transferase hexapeptide repeat family. Homotrimer. It depends on Mg(2+) as a cofactor.

It is found in the cytoplasm. The enzyme catalyses alpha-D-glucosamine 1-phosphate + acetyl-CoA = N-acetyl-alpha-D-glucosamine 1-phosphate + CoA + H(+). It catalyses the reaction N-acetyl-alpha-D-glucosamine 1-phosphate + UTP + H(+) = UDP-N-acetyl-alpha-D-glucosamine + diphosphate. The protein operates within nucleotide-sugar biosynthesis; UDP-N-acetyl-alpha-D-glucosamine biosynthesis; N-acetyl-alpha-D-glucosamine 1-phosphate from alpha-D-glucosamine 6-phosphate (route II): step 2/2. It functions in the pathway nucleotide-sugar biosynthesis; UDP-N-acetyl-alpha-D-glucosamine biosynthesis; UDP-N-acetyl-alpha-D-glucosamine from N-acetyl-alpha-D-glucosamine 1-phosphate: step 1/1. Its pathway is bacterial outer membrane biogenesis; LPS lipid A biosynthesis. Catalyzes the last two sequential reactions in the de novo biosynthetic pathway for UDP-N-acetylglucosamine (UDP-GlcNAc). The C-terminal domain catalyzes the transfer of acetyl group from acetyl coenzyme A to glucosamine-1-phosphate (GlcN-1-P) to produce N-acetylglucosamine-1-phosphate (GlcNAc-1-P), which is converted into UDP-GlcNAc by the transfer of uridine 5-monophosphate (from uridine 5-triphosphate), a reaction catalyzed by the N-terminal domain. The protein is Bifunctional protein GlmU of Synechococcus sp. (strain RCC307).